The primary structure comprises 431 residues: MKNYIEIVDVYARQILDSRCNPTVEVEVELEDGTVGVAAVPSGASTGAFEAVELRDGDKSQYLGKGVLKAVDNVNTTIADELVGMNVLDQVAIDKTMIELDGTDNKAKLGANAMLGVSLACAKAAANSLGMSLYQYIGGVNGKVLPVPMMNIINGGKHADNNVDLQEFMIMPAGAPSFSEALRMCSEVYHALKSTLKAQGYDTGVGDEGGFAPNLKSNEEAIVVIIEAIKKAGYTPGKDIFIALDPASSEIFEDGKYNLAGEGRVLTPEEMANYYVELAEKYPIISIEDGMAEEDWDGWKILTEKIGNKVQLVGDDLFVTNTERLSKGIKLGVANSILIKLNQIGTLTETLNAIEMAERAGYTAVVSHRSGETEDTTIADLVVAVNAGQIKTGAPARSERVAKYNQLLRIEEELNDMGEYRGLKAFYNINK.

(2R)-2-phosphoglycerate is bound at residue glutamine 166. The Proton donor role is filled by glutamate 208. 3 residues coordinate Mg(2+): aspartate 245, glutamate 288, and aspartate 315. The (2R)-2-phosphoglycerate site is built by lysine 340, arginine 369, serine 370, and lysine 391. Lysine 340 (proton acceptor) is an active-site residue.

It belongs to the enolase family. Mg(2+) is required as a cofactor.

The protein resides in the cytoplasm. It localises to the secreted. It is found in the cell surface. The catalysed reaction is (2R)-2-phosphoglycerate = phosphoenolpyruvate + H2O. The protein operates within carbohydrate degradation; glycolysis; pyruvate from D-glyceraldehyde 3-phosphate: step 4/5. Its function is as follows. Catalyzes the reversible conversion of 2-phosphoglycerate (2-PG) into phosphoenolpyruvate (PEP). It is essential for the degradation of carbohydrates via glycolysis. This is Enolase from Clostridium botulinum (strain Kyoto / Type A2).